A 569-amino-acid polypeptide reads, in one-letter code: AA9 family lytic polysaccharide monooxygenase A (569 aa).

Residues 1 to 16 form the signal peptide; the sequence is MRIFSLALGFLPLVAG. Cu(2+) is bound by residues His17 and His99. Cys59 and Cys189 are oxidised to a cystine. The N-linked (GlcNAc...) asparagine glycan is linked to Asn112. O2-binding residues include His174 and Gln184. Position 186 (Tyr186) interacts with Cu(2+). N-linked (GlcNAc...) asparagine glycosylation is found at Asn244 and Asn381. The segment covering 399–424 has biased composition (low complexity); the sequence is AADATATATATTEDAEATTAAEAAAT. A disordered region spans residues 399–439; the sequence is AADATATATATTEDAEATTAAEAAATSGAGRPGRGHGHGRG. The N-linked (GlcNAc...) asparagine glycan is linked to Asn472.

The protein belongs to the polysaccharide monooxygenase AA9 family. The cofactor is Cu(2+).

Its subcellular location is the secreted. It catalyses the reaction [(1-&gt;4)-beta-D-glucosyl]n+m + reduced acceptor + O2 = 4-dehydro-beta-D-glucosyl-[(1-&gt;4)-beta-D-glucosyl]n-1 + [(1-&gt;4)-beta-D-glucosyl]m + acceptor + H2O.. Its function is as follows. Lytic polysaccharide monooxygenase (LPMO) that depolymerizes crystalline and amorphous polysaccharides via the oxidation of scissile alpha- or beta-(1-4)-glycosidic bonds, yielding C4 oxidation products. Catalysis by LPMOs requires the reduction of the active-site copper from Cu(II) to Cu(I) by a reducing agent and H(2)O(2) or O(2) as a cosubstrate. This is AA9 family lytic polysaccharide monooxygenase A from Emericella nidulans (strain FGSC A4 / ATCC 38163 / CBS 112.46 / NRRL 194 / M139) (Aspergillus nidulans).